The primary structure comprises 101 residues: Small ribosomal subunit protein uS14 (101 aa).

It belongs to the universal ribosomal protein uS14 family. As to quaternary structure, part of the 30S ribosomal subunit. Contacts proteins S3 and S10.

Functionally, binds 16S rRNA, required for the assembly of 30S particles and may also be responsible for determining the conformation of the 16S rRNA at the A site. The sequence is that of Small ribosomal subunit protein uS14 from Photobacterium profundum (strain SS9).